The sequence spans 524 residues: Zinc finger protein 346 (524 aa).

7 Matrin-type zinc fingers span residues 34 to 64 (TQCK…KVRR), 92 to 126 (DRSK…LRLR), 162 to 192 (KFCK…QETK), 226 to 260 (GKGF…LMSM), 286 to 316 (FSCD…HLKS), 343 to 373 (FSCD…HLMS), and 400 to 430 (FSCD…QLMS). Zn(2+) contacts are provided by C36, C39, H52, H58, C97, C100, H113, and H119. Disordered stretches follow at residues 453-486 (SAGG…GSLP) and 494-513 (PLYP…TMSP). Over residues 476 to 486 (PKGPSSFGSLP) the composition is skewed to low complexity.

Its subcellular location is the nucleus. It is found in the cytoplasm. Functionally, binds preferentially to dsRNA, but also to RNA-DNA hybrids. The polypeptide is Zinc finger protein 346 (Xenopus laevis (African clawed frog)).